The chain runs to 593 residues: Aspartate--tRNA(Asp/Asn) ligase (593 aa).

Glu-173 serves as a coordination point for L-aspartate. The aspartate stretch occupies residues 197–200 (QLFK). Arg-219 is an L-aspartate binding site. ATP is bound by residues 219–221 (RDE) and Gln-228. His-451 contributes to the L-aspartate binding site. Position 485 (Glu-485) interacts with ATP. Arg-492 is an L-aspartate binding site. 537–540 (GIDR) provides a ligand contact to ATP.

It belongs to the class-II aminoacyl-tRNA synthetase family. Type 1 subfamily. Homodimer.

Its subcellular location is the cytoplasm. The catalysed reaction is tRNA(Asx) + L-aspartate + ATP = L-aspartyl-tRNA(Asx) + AMP + diphosphate. Its function is as follows. Aspartyl-tRNA synthetase with relaxed tRNA specificity since it is able to aspartylate not only its cognate tRNA(Asp) but also tRNA(Asn). Reaction proceeds in two steps: L-aspartate is first activated by ATP to form Asp-AMP and then transferred to the acceptor end of tRNA(Asp/Asn). The protein is Aspartate--tRNA(Asp/Asn) ligase of Legionella pneumophila subsp. pneumophila (strain Philadelphia 1 / ATCC 33152 / DSM 7513).